Reading from the N-terminus, the 316-residue chain is Methionyl-tRNA formyltransferase (316 aa).

112–115 (SLLP) is a (6S)-5,6,7,8-tetrahydrofolate binding site.

Belongs to the Fmt family.

The enzyme catalyses L-methionyl-tRNA(fMet) + (6R)-10-formyltetrahydrofolate = N-formyl-L-methionyl-tRNA(fMet) + (6S)-5,6,7,8-tetrahydrofolate + H(+). Functionally, attaches a formyl group to the free amino group of methionyl-tRNA(fMet). The formyl group appears to play a dual role in the initiator identity of N-formylmethionyl-tRNA by promoting its recognition by IF2 and preventing the misappropriation of this tRNA by the elongation apparatus. The chain is Methionyl-tRNA formyltransferase from Trichlorobacter lovleyi (strain ATCC BAA-1151 / DSM 17278 / SZ) (Geobacter lovleyi).